Here is a 152-residue protein sequence, read N- to C-terminus: SsrA-binding protein (152 aa).

It belongs to the SmpB family.

The protein localises to the cytoplasm. Its function is as follows. Required for rescue of stalled ribosomes mediated by trans-translation. Binds to transfer-messenger RNA (tmRNA), required for stable association of tmRNA with ribosomes. tmRNA and SmpB together mimic tRNA shape, replacing the anticodon stem-loop with SmpB. tmRNA is encoded by the ssrA gene; the 2 termini fold to resemble tRNA(Ala) and it encodes a 'tag peptide', a short internal open reading frame. During trans-translation Ala-aminoacylated tmRNA acts like a tRNA, entering the A-site of stalled ribosomes, displacing the stalled mRNA. The ribosome then switches to translate the ORF on the tmRNA; the nascent peptide is terminated with the 'tag peptide' encoded by the tmRNA and targeted for degradation. The ribosome is freed to recommence translation, which seems to be the essential function of trans-translation. This Rickettsia rickettsii protein is SsrA-binding protein.